The primary structure comprises 612 residues: Dihydroxy-acid dehydratase (612 aa).

Asp81 serves as a coordination point for Mg(2+). Cys122 is a binding site for [2Fe-2S] cluster. Asp123 and Lys124 together coordinate Mg(2+). An N6-carboxylysine modification is found at Lys124. Cys193 serves as a coordination point for [2Fe-2S] cluster. Glu489 provides a ligand contact to Mg(2+). Ser515 serves as the catalytic Proton acceptor.

It belongs to the IlvD/Edd family. Homodimer. The cofactor is [2Fe-2S] cluster. It depends on Mg(2+) as a cofactor.

It carries out the reaction (2R)-2,3-dihydroxy-3-methylbutanoate = 3-methyl-2-oxobutanoate + H2O. The enzyme catalyses (2R,3R)-2,3-dihydroxy-3-methylpentanoate = (S)-3-methyl-2-oxopentanoate + H2O. It functions in the pathway amino-acid biosynthesis; L-isoleucine biosynthesis; L-isoleucine from 2-oxobutanoate: step 3/4. The protein operates within amino-acid biosynthesis; L-valine biosynthesis; L-valine from pyruvate: step 3/4. Functionally, functions in the biosynthesis of branched-chain amino acids. Catalyzes the dehydration of (2R,3R)-2,3-dihydroxy-3-methylpentanoate (2,3-dihydroxy-3-methylvalerate) into 2-oxo-3-methylpentanoate (2-oxo-3-methylvalerate) and of (2R)-2,3-dihydroxy-3-methylbutanoate (2,3-dihydroxyisovalerate) into 2-oxo-3-methylbutanoate (2-oxoisovalerate), the penultimate precursor to L-isoleucine and L-valine, respectively. This Stutzerimonas stutzeri (strain A1501) (Pseudomonas stutzeri) protein is Dihydroxy-acid dehydratase.